The primary structure comprises 306 residues: Ribokinase (306 aa).

Residues 12–14 (NAD), 40–44 (GKGAN), and Glu-141 each bind substrate. ATP is bound by residues Asn-185 and 221 to 226 (TLGAKG). 2 residues coordinate K(+): Asp-247 and Thr-249. ATP is bound at residue 252 to 253 (GD). Asp-253 contributes to the substrate binding site. The active-site Proton acceptor is Asp-253. K(+)-binding residues include Ser-283, Lys-286, Gly-288, and Ser-292.

Belongs to the carbohydrate kinase PfkB family. Ribokinase subfamily. As to quaternary structure, homodimer. Mg(2+) is required as a cofactor.

Its subcellular location is the cytoplasm. It carries out the reaction D-ribose + ATP = D-ribose 5-phosphate + ADP + H(+). The protein operates within carbohydrate metabolism; D-ribose degradation; D-ribose 5-phosphate from beta-D-ribopyranose: step 2/2. With respect to regulation, activated by a monovalent cation that binds near, but not in, the active site. The most likely occupant of the site in vivo is potassium. Ion binding induces a conformational change that may alter substrate affinity. In terms of biological role, catalyzes the phosphorylation of ribose at O-5 in a reaction requiring ATP and magnesium. The resulting D-ribose-5-phosphate can then be used either for sythesis of nucleotides, histidine, and tryptophan, or as a component of the pentose phosphate pathway. This chain is Ribokinase, found in Haemophilus influenzae (strain ATCC 51907 / DSM 11121 / KW20 / Rd).